The sequence spans 359 residues: MNIYDQLQPVEDRYEELGELLSDPYVVSDTKRFMELSREEANTRETVTAYREYKQVIQNISDAEEMIKDASGDAELEEMAKEELKESKAAKEEYEERLKILLLPKDPNDDKNIILEIRGAAGGDEAALFAGDLLTMYQKYAETQGWRFEVMESSVNGVGGIKEVVAMVSGQSVYSKLKYESGAHRVQRVPVTESQGRVHTSTATVLVMPEVEEVEYEIDQKDLRADIYHASGAGGQNVNKVATAVRMVHIPTGIKVEMQEERTQQKNRDKAMKIIRARVADHFAQIAQDEQDAERKSTVGTGDRSERIRTYNFPQNRVTDHRIGLTLQKLDTILSGKMDEVIDALVMYDQTQKLEALNK.

Glutamine 236 carries the N5-methylglutamine modification.

This sequence belongs to the prokaryotic/mitochondrial release factor family. Post-translationally, methylated by PrmC. Methylation increases the termination efficiency of RF1.

The protein resides in the cytoplasm. Functionally, peptide chain release factor 1 directs the termination of translation in response to the peptide chain termination codons UAG and UAA. The polypeptide is Peptide chain release factor 1 (Streptococcus agalactiae).